The sequence spans 836 residues: Protein-glutamine gamma-glutamyltransferase K (836 aa).

Residues 1–33 (MDGPRSDMGRSDVSRSDMSRSDMGRSDMGRSDV) show a composition bias toward basic and acidic residues. Disordered stretches follow at residues 1–68 (MDGP…SRGG) and 89–125 (DDWG…DGTI). Position 46 is a phosphothreonine (threonine 46). Serine 48, serine 98, and serine 112 each carry phosphoserine. Residues 89–112 (DDWGREPSDSRDRGSSSRGGRPDS) are compositionally biased toward basic and acidic residues. Residues cysteine 397, histidine 456, and aspartate 479 contribute to the active site. Ca(2+) contacts are provided by asparagine 519, aspartate 521, glutamate 568, and glutamate 573. Position 824 is a phosphoserine (serine 824).

The protein belongs to the transglutaminase superfamily. Transglutaminase family. Interacts with PLAAT4. It depends on Ca(2+) as a cofactor. Palmitoylated. Post-translationally, the membrane anchorage region possesses a cluster of five cysteines within which fatty acid(s) may become thioester-linked. It is subject to phorbol ester-stimulated phosphorylation and is hypersensitive to proteolysis, which releases the enzyme in a soluble form. In terms of processing, tyrosine-phosphorylated.

The protein localises to the membrane. The enzyme catalyses L-glutaminyl-[protein] + L-lysyl-[protein] = [protein]-L-lysyl-N(6)-5-L-glutamyl-[protein] + NH4(+). Inhibited by retinoic acid, but phorbol ester treatment activates it. Functionally, catalyzes the cross-linking of proteins and the conjugation of polyamines to proteins. Responsible for cross-linking epidermal proteins during formation of the stratum corneum. Involved in cell proliferation. The polypeptide is Protein-glutamine gamma-glutamyltransferase K (TGM1) (Oryctolagus cuniculus (Rabbit)).